The following is a 341-amino-acid chain: Golgi-associated RAB2 interactor protein 1B (341 aa).

The protein belongs to the GARIN family. Expressed in testis (at protein level).

The protein resides in the golgi apparatus. Functionally, RAB2B effector protein required for accurate acrosome formation and normal male fertility. In complex with RAB2A/RAB2B, seems to suppress excessive vesicle trafficking during acrosome formation. The protein is Golgi-associated RAB2 interactor protein 1B of Mus musculus (Mouse).